The chain runs to 226 residues: 2-C-methyl-D-erythritol 4-phosphate cytidylyltransferase (226 aa).

Belongs to the IspD/TarI cytidylyltransferase family. IspD subfamily.

It carries out the reaction 2-C-methyl-D-erythritol 4-phosphate + CTP + H(+) = 4-CDP-2-C-methyl-D-erythritol + diphosphate. The protein operates within isoprenoid biosynthesis; isopentenyl diphosphate biosynthesis via DXP pathway; isopentenyl diphosphate from 1-deoxy-D-xylulose 5-phosphate: step 2/6. In terms of biological role, catalyzes the formation of 4-diphosphocytidyl-2-C-methyl-D-erythritol from CTP and 2-C-methyl-D-erythritol 4-phosphate (MEP). The sequence is that of 2-C-methyl-D-erythritol 4-phosphate cytidylyltransferase from Bacillus cytotoxicus (strain DSM 22905 / CIP 110041 / 391-98 / NVH 391-98).